A 440-amino-acid chain; its full sequence is 3-phosphoshikimate 1-carboxyvinyltransferase (440 aa).

Residues K31, S32, and R36 each contribute to the 3-phosphoshikimate site. K31 serves as a coordination point for phosphoenolpyruvate. G104 and R133 together coordinate phosphoenolpyruvate. 3-phosphoshikimate contacts are provided by S178, Q180, D328, and K355. Q180 lines the phosphoenolpyruvate pocket. D328 serves as the catalytic Proton acceptor. 2 residues coordinate phosphoenolpyruvate: R359 and R401.

It belongs to the EPSP synthase family. In terms of assembly, monomer.

It is found in the cytoplasm. The catalysed reaction is 3-phosphoshikimate + phosphoenolpyruvate = 5-O-(1-carboxyvinyl)-3-phosphoshikimate + phosphate. It participates in metabolic intermediate biosynthesis; chorismate biosynthesis; chorismate from D-erythrose 4-phosphate and phosphoenolpyruvate: step 6/7. Its function is as follows. Catalyzes the transfer of the enolpyruvyl moiety of phosphoenolpyruvate (PEP) to the 5-hydroxyl of shikimate-3-phosphate (S3P) to produce enolpyruvyl shikimate-3-phosphate and inorganic phosphate. The chain is 3-phosphoshikimate 1-carboxyvinyltransferase from Thermosynechococcus vestitus (strain NIES-2133 / IAM M-273 / BP-1).